Here is a 325-residue protein sequence, read N- to C-terminus: Lactonase drp35 (325 aa).

10 residues coordinate Ca(2+): Glu46, Ser108, Gly110, Glu128, Thr131, Tyr133, Asp136, Asn183, Asp234, and Ser235. The Proton donor role is filled by Asp234.

The protein belongs to the SMP-30/CGR1 family. Requires Ca(2+) as cofactor.

Its subcellular location is the cytoplasm. In terms of biological role, exhibits lactonase activity. Acts in cells with perturbed membrane integrity and is possibly related to the membrane homeostasis. The sequence is that of Lactonase drp35 (drp35) from Staphylococcus haemolyticus (strain JCSC1435).